The following is a 307-amino-acid chain: Nodulation protein NoeC (307 aa).

Helical transmembrane passes span 46–66 (APLW…YVLN), 91–111 (SGLT…VCAI), 117–137 (LFAI…KVRG), 140–160 (VLDL…GATA), 163–183 (IPVP…LASI), 212–232 (IVAL…ELFV), 238–258 (AQGP…AYWI), and 279–299 (VTDG…VFLM).

Its subcellular location is the cell membrane. This Azorhizobium caulinodans (strain ATCC 43989 / DSM 5975 / JCM 20966 / LMG 6465 / NBRC 14845 / NCIMB 13405 / ORS 571) protein is Nodulation protein NoeC (noeC).